A 600-amino-acid polypeptide reads, in one-letter code: MTTIFGSSNAMFLNIEANKENIPPGTEFKKESFVLPEPRVNRTTDPDHENLLPSPVPRPSPAMSQLSDASFLSQDGGAVNTSADEADDDLEVTSRKEKSLGLLCQRFLIAINEETVGSSTREVHLETVARKMNVEKRRIYDIVNVMEALDAMQKTNKSYYQWQGLESLPKLMFDLQNEAVEEGLPERVLRVEQAMCSFTELSSPRGKQGFKDIVGSFVSCTSTPTTPSTSFDSVTVKMEPAGLLEKRSRVDTRDRQGRNSLAQLCRRFLMVLLSNPKNIRKVSLDVASTVLIKDPETEGFEPPSRSRCRRLYDIANVLVALGLIKKVHYLFGTKKIPLFVYCGPEPDQTGSFDVFQSVERLLSSSQNVPQTPIIKAQTDKIVQQIAGFGKRTLSEQNLTKPSGNTPKIAKIKSAAVRSSPMYMENNLFMFAEVVTAEAAAEKMRYDAFAQLSRTILGSVASINSLNAPLTSSQHPMTSRLPPLPMAPLQLPKLPEIPKPQAQKQFTFPATSRPRFNFPDYTPVQSTIRPLVSQMTFPQESSQLHNLDVKPKHLMSNILGESKKFKNNQNTFEHTTSSAFQVVKKGETRPKKVFGEIQNLQ.

The disordered stretch occupies residues 35–65; sequence LPEPRVNRTTDPDHENLLPSPVPRPSPAMSQ. Residues 39 to 50 show a composition bias toward basic and acidic residues; the sequence is RVNRTTDPDHEN. DNA-binding regions lie at residues 95-164 and 253-343; these read RKEK…QWQG and RDRQ…VYCG.

This sequence belongs to the E2F/DP family.

It is found in the nucleus. Its function is as follows. Probable transcription factor which represses gene expression in a subset of ventral nerve cord neurons. Involved in regulating programmed cell death and determining cell fate during development, acting in a partially redundant manner with lin-39 to repress the BH3 domain-encoding gene egl-1 in the VA and VB motor neurons. The polypeptide is Transcription factor efl-3 (Caenorhabditis elegans).